A 644-amino-acid chain; its full sequence is Protein cueball (644 aa).

Positions 1–26 (MIRIRFGMDVLLVVLLATCLLTPAHG) are cleaved as a signal peptide. Residues 27 to 531 (TPLEWDFAVT…VCLTPRVWTS (505 aa)) are Extracellular-facing. N-linked (GlcNAc...) asparagine glycans are attached at residues asparagine 82 and asparagine 108. LDL-receptor class B repeat units follow at residues 121–166 (MNLF…DVCR), 167–211 (RKLY…DQLS), and 212–257 (DRLF…TNDA). N-linked (GlcNAc...) asparagine glycans are attached at residues asparagine 175 and asparagine 190. The N-linked (GlcNAc...) asparagine glycan is linked to asparagine 313. 2 consecutive EGF-like domains span residues 398–430 (EIRECHNYCVHGTCQMSELAYPKCYCQPGFTGE) and 433–471 (ELSVCSGLCLNGGHCRVSKDENEAPSCECPAKFGGARCE). 5 disulfides stabilise this stretch: cysteine 402/cysteine 411, cysteine 406/cysteine 421, cysteine 437/cysteine 447, cysteine 441/cysteine 459, and cysteine 461/cysteine 470. N-linked (GlcNAc...) asparagine glycans are attached at residues asparagine 473 and asparagine 508. The chain crosses the membrane as a helical span at residues 532 to 552 (SVIIILVVGIVSSLLLVAVIV). Residues 553 to 644 (HGIRRLYKPK…LIHNMEDDLY (92 aa)) are Cytoplasmic-facing.

The protein belongs to the cueball family.

The protein resides in the cell membrane. Functionally, has a role in spermatogenesis and oogenesis. The sequence is that of Protein cueball from Drosophila simulans (Fruit fly).